The sequence spans 482 residues: Argininosuccinate synthase (482 aa).

ATP contacts are provided by residues 17 to 25 and alanine 43; that span reads AFSGGLDTS. Residue tyrosine 99 coordinates L-citrulline. 2 residues coordinate ATP: glycine 129 and threonine 131. 3 residues coordinate L-aspartate: threonine 131, asparagine 135, and aspartate 136. Asparagine 135 is a binding site for L-citrulline. Aspartate 136 is an ATP binding site. Positions 139 and 192 each coordinate L-citrulline. Aspartate 194 contacts ATP. Residues threonine 201, glutamate 203, and glutamate 280 each contribute to the L-citrulline site. A disordered region spans residues 461-482; it reads SRGEATDEETMLDRAAMESGTD.

Belongs to the argininosuccinate synthase family. Type 2 subfamily. Homotetramer.

The protein localises to the cytoplasm. It catalyses the reaction L-citrulline + L-aspartate + ATP = 2-(N(omega)-L-arginino)succinate + AMP + diphosphate + H(+). It participates in amino-acid biosynthesis; L-arginine biosynthesis; L-arginine from L-ornithine and carbamoyl phosphate: step 2/3. This Streptomyces lavendulae protein is Argininosuccinate synthase (argG).